Reading from the N-terminus, the 449-residue chain is Allantoinase (449 aa).

Zn(2+) contacts are provided by His-59, His-61, Lys-146, His-182, His-238, and Asp-311. Lys-146 is subject to N6-carboxylysine.

It belongs to the metallo-dependent hydrolases superfamily. Allantoinase family. Homotetramer. It depends on Zn(2+) as a cofactor. Post-translationally, carboxylation allows a single lysine to coordinate two zinc ions.

It catalyses the reaction (S)-allantoin + H2O = allantoate + H(+). It participates in nitrogen metabolism; (S)-allantoin degradation; allantoate from (S)-allantoin: step 1/1. Functionally, catalyzes the conversion of allantoin (5-ureidohydantoin) to allantoic acid by hydrolytic cleavage of the five-member hydantoin ring. This chain is Allantoinase, found in Deinococcus geothermalis (strain DSM 11300 / CIP 105573 / AG-3a).